The chain runs to 775 residues: E3 ubiquitin-protein ligase ICP0 (775 aa).

Residues 1–112 (MEPRPGASTR…PPREDGGSDE (112 aa)) form a disordered region. Basic and acidic residues-rich tracts occupy residues 10–21 (RRPEGRPQREPA) and 45–57 (VGGRGDADHHDDD). Residues 58 to 69 (SASEADSTDTEL) are compositionally biased toward acidic residues. Residue T67 is modified to Phosphothreonine; by host; by CK1. The segment at 116–157 (CAVCTDEIAPHLRCDTFPCMHRFCIPCMKTWMQLRNTCPLCN) adopts an RING-type zinc-finger fold. The disordered stretch occupies residues 221–636 (RALSPTHPEP…HAETSGAVPA (416 aa)). Residues 231–243 (TTDEDDDDLDDAD) are compositionally biased toward acidic residues. Over residues 258-284 (RRGAAAPPVTGGASHAAPQPAAARTAP) the composition is skewed to low complexity. Residues 293 to 302 (GSSNTNTTTN) are compositionally biased toward polar residues. Positions 310–321 (RQSRAAAPRGAS) are enriched in low complexity. Over residues 322-331 (GPSGGVGVGV) the composition is skewed to gly residues. Residues 369-390 (PASPHRPPAAPMPGSAPRPGPP) are compositionally biased toward pro residues. The span at 391 to 409 (ASAAASGPARPRAAVAPCV) shows a compositional bias: low complexity. The segment covering 410-421 (RAPPPGPGPRAP) has biased composition (pro residues). Positions 422-431 (APGAEPAARP) are enriched in low complexity. Positions 439–453 (QSHSSLAQAANQEQS) are enriched in polar residues. Gly residues predominate over residues 464 to 476 (GSGGPGVEGGHGP). The segment covering 477–493 (SRGAAPSGAAPLPSAAS) has biased composition (low complexity). The span at 509–519 (GQENPSPQSTR) shows a compositional bias: polar residues. A compositionally biased stretch (gly residues) spans 539–549 (GPGGRGQGGPG). Residues 550–592 (TPLTSSAASASSSSASSSSAPTPAGAASSAAGAASSSASASSG) show a composition bias toward low complexity. Residues 617-626 (GPRKCARKTR) are compositionally biased toward basic residues.

This sequence belongs to the simplexviruses ICp0 family. Interacts directly with human RCOR1/CoREST protein, leading to the disruption of the human BHC corepressor complex. Interacts with human CENPA, leading to its degradation. Interacts with human USP7; this interaction modulates ICP0 stability. Interacts with human CDC34. Interacts (when phosphorylated) with human RNF8 (via FHA domain). Interacts with human TRIM27. Interacts with human ZBP1. Interacts with host MORC3; this interaction promotes the degradation of host MORC3. Phosphorylated at Thr-67, leading to promote interaction with host RNF8. Phosphorylated by host CHEK2; leading to increased SUMO-targeted ubiquitin ligase activity of ICP0. In terms of processing, auto-ubiquitinated. Deubiquitinated by host USP7; leading to stabilize it.

The protein localises to the host cytoplasm. The protein resides in the host nucleus. The enzyme catalyses S-ubiquitinyl-[E2 ubiquitin-conjugating enzyme]-L-cysteine + [acceptor protein]-L-lysine = [E2 ubiquitin-conjugating enzyme]-L-cysteine + N(6)-ubiquitinyl-[acceptor protein]-L-lysine.. Functionally, SUMO-targeted ubiquitin ligase that plays an essential role in nuclear antiviral defense evasion triggered by dsDNA viruses. Acts during the initial stages of lytic infection and the reactivation of latent viral genome. Prevents the antiviral effect of nuclear bodies by degrading host PML, SP100 and MORC3. Prevents antiviral response to viral DNA induced by IFI16 by degrading it. Additionally, inhibits host IRF3 nuclear signaling to prevent interferon production by the infected cells. Interestingly, the E3 ubiquitin ligase activity associated with the RING finger domain does not seem to be directly required to inhibit the activation of IRF3 but instead plays a critical role in modulating the cellular localization of ICP0. Upon reactivation of latent genome, suppresses the silencing of viral DNA by dissociating either HDAC1 or HDAC2 from the HDAC-RCOR1-REST-KDM1A complex localized at the ND10 structures and causes their dispersal. Two cellular histone ubiquitin ligases RNF8 and RNF168 are also targeted by ICP0 for degradation, leading to a loss of ubiquitinated forms of H2A, a relief of transcriptional repression, and the activation of latent viral genomes. Enhances the localization of host CCND3 to ND10 bodies that serve as precursors of replication compartments to enable efficient viral replication. Like many RING-finger E3 ubiquitin ligases, ICP0 can induce its own ubiquitination, an activity that promotes its instability due to its targeting to the 26S proteasome for degradation. ICP0 restricts this process by recruiting the cellular ubiquitin-specific protease USP7 that cleaves the anchored ubiquitin chains from ICP0, thereby promoting its stabilization. The chain is E3 ubiquitin-protein ligase ICP0 (ICP0) from Homo sapiens (Human).